Here is a 98-residue protein sequence, read N- to C-terminus: Plastocyanin (98 aa).

Positions 1–98 (AQIVKLGGDD…AGMKMTITVQ (98 aa)) constitute a Plastocyanin-like domain. Positions 38, 83, 86, and 91 each coordinate Cu(2+).

The protein belongs to the plastocyanin family. The cofactor is Cu(2+).

The protein resides in the plastid. Its subcellular location is the chloroplast thylakoid membrane. Participates in electron transfer between P700 and the cytochrome b6-f complex in photosystem I. Has antiviral activity against Potato virus Y (strain N). The polypeptide is Plastocyanin (PETE) (Ulva pertusa (Sea lettuce)).